The following is a 50-amino-acid chain: Large ribosomal subunit protein bL33B (50 aa).

It belongs to the bacterial ribosomal protein bL33 family.

This Enterococcus faecalis (strain ATCC 700802 / V583) protein is Large ribosomal subunit protein bL33B (rpmG2).